Reading from the N-terminus, the 396-residue chain is Endo-1,4-beta-xylanase A (396 aa).

The signal sequence occupies residues 1-28 (MITLFRKPFVAGLAISLLVGGGIGNVAA). The region spanning 51 to 396 (AWQVASLSER…VKPAYWRIID (346 aa)) is the GH10 domain. The active-site Proton donor is Glu195. The Nucleophile role is filled by Glu301.

This sequence belongs to the glycosyl hydrolase 10 (cellulase F) family.

The protein resides in the secreted. It carries out the reaction Endohydrolysis of (1-&gt;4)-beta-D-xylosidic linkages in xylans.. Its pathway is glycan degradation; xylan degradation. This Halalkalibacterium halodurans (strain ATCC BAA-125 / DSM 18197 / FERM 7344 / JCM 9153 / C-125) (Bacillus halodurans) protein is Endo-1,4-beta-xylanase A (xynA).